A 270-amino-acid polypeptide reads, in one-letter code: Urease accessory protein UreD (270 aa).

The protein belongs to the UreD family. UreD, UreF and UreG form a complex that acts as a GTP-hydrolysis-dependent molecular chaperone, activating the urease apoprotein by helping to assemble the nickel containing metallocenter of UreC. The UreE protein probably delivers the nickel.

It localises to the cytoplasm. Its function is as follows. Required for maturation of urease via the functional incorporation of the urease nickel metallocenter. This Beijerinckia indica subsp. indica (strain ATCC 9039 / DSM 1715 / NCIMB 8712) protein is Urease accessory protein UreD.